Reading from the N-terminus, the 138-residue chain is MGGLVYFSSGSGNTARFVTRLGLPAGRIPISPRDEMPAPALPYVLICPTYADGMGRGAVPKQVIRFLNDPDRRALLRGVIATGNRNFGATYALAGRVISDKCNVPVLYRFELAGTDLDISRVQAGLAKFWGTECLTMA.

This sequence belongs to the NrdI family.

Its function is as follows. Probably involved in ribonucleotide reductase function. This is Protein NrdI from Paracoccus denitrificans (strain Pd 1222).